Here is a 150-residue protein sequence, read N- to C-terminus: MKEMVDYGIIGFLIFLSVIVIAIAIERLWFFATLRVDDYTDRRKLELALHKRLTLVATIGSNAPYIGLLGTVMGIMLTFMDLGSASGIDTKAIMTNLALALKATGMGLLVAIPAIVIYNLLVRKSEILVTKWDIFHHPVDTQSHEVYSKA.

Transmembrane regions (helical) follow at residues 5–25, 63–83, and 97–117; these read VDYGIIGFLIFLSVIVIAIAI, APYIGLLGTVMGIMLTFMDLG, and LALALKATGMGLLVAIPAIVI.

This sequence belongs to the ExbB/TolQ family.

The protein resides in the cell inner membrane. This is Putative biopolymer transport protein ExbB-like 2 from Helicobacter pylori (strain J99 / ATCC 700824) (Campylobacter pylori J99).